The following is a 392-amino-acid chain: MTLLGTALRPAATRVMLLGAGELGKEVAIECQRLGIEVIAVDRYPDAPAMHVAHRSHVINMLDGEALRHVITEEKPHYIVPEIEAIATDTLRELEGEGLNVVPCARATQLTMNREGIRRLAAEELGLPTSTYRFADSEASFHDAVAAVGFPCIVKPVMSSSGKGQSFIRSAEQLAQAWEYAQQGGRAGAGRVIVEGVVKFDFEITLLTVSAVDGVHFCAPVGHRQQDGDYRESWQPQQMSELALKRAQEIARHVVLALGGHGLFGVELFVCGDEVIFSEVSPRPHDTGMVTLISQDLSEFALHVRAFLGMPVGAIRQYGPAASAVILPQLTSQNVTFDNVHAAVGAGVQVRLFGKPEIDGTRRLGVALATGENVEEAVIRAKKAVSRVTVKG.

N(1)-(5-phospho-beta-D-ribosyl)glycinamide contacts are provided by residues Glu-22–Leu-23 and Glu-82. ATP contacts are provided by residues Arg-114, Lys-155, Ser-160–Gln-165, Glu-195–Val-198, and Glu-203. The 190-residue stretch at Arg-119 to Leu-308 folds into the ATP-grasp domain. Mg(2+) contacts are provided by Glu-267 and Glu-279. Residues Asp-286, Lys-355, and Arg-362–Arg-363 contribute to the N(1)-(5-phospho-beta-D-ribosyl)glycinamide site.

This sequence belongs to the PurK/PurT family. In terms of assembly, homodimer.

It catalyses the reaction N(1)-(5-phospho-beta-D-ribosyl)glycinamide + formate + ATP = N(2)-formyl-N(1)-(5-phospho-beta-D-ribosyl)glycinamide + ADP + phosphate + H(+). Its pathway is purine metabolism; IMP biosynthesis via de novo pathway; N(2)-formyl-N(1)-(5-phospho-D-ribosyl)glycinamide from N(1)-(5-phospho-D-ribosyl)glycinamide (formate route): step 1/1. Involved in the de novo purine biosynthesis. Catalyzes the transfer of formate to 5-phospho-ribosyl-glycinamide (GAR), producing 5-phospho-ribosyl-N-formylglycinamide (FGAR). Formate is provided by PurU via hydrolysis of 10-formyl-tetrahydrofolate. The polypeptide is Formate-dependent phosphoribosylglycinamide formyltransferase (Salmonella typhimurium (strain LT2 / SGSC1412 / ATCC 700720)).